The sequence spans 358 residues: Serine/threonine-protein phosphatase 2A activator 2 (358 aa).

It belongs to the PTPA-type PPIase family.

It is found in the cytoplasm. It carries out the reaction [protein]-peptidylproline (omega=180) = [protein]-peptidylproline (omega=0). Functionally, PPIases accelerate the folding of proteins. It catalyzes the cis-trans isomerization of proline imidic peptide bonds in oligopeptides. Acts as a regulatory subunit for PP2A-like phosphatases modulating their activity or substrate specificity, probably by inducing a conformational change in the catalytic subunit, a direct target of the PPIase. Can reactivate inactive phosphatase PP2A-phosphatase methylesterase complexes (PP2Ai) in presence of ATP and Mg(2+) by dissociating the inactive form from the complex. This Candida glabrata (strain ATCC 2001 / BCRC 20586 / JCM 3761 / NBRC 0622 / NRRL Y-65 / CBS 138) (Yeast) protein is Serine/threonine-protein phosphatase 2A activator 2 (RRD2).